The primary structure comprises 658 residues: MNFDIVQRRLSLADDVVDSDSPMQEQDELPMTQIPGDSSANVLISTQVQSKLDEMELKKVMKKNLTQFAFESLGATESAPPSRAATPPAKATKRKKSTKAAGRTSTGTGKKRKRTPSSIKSITQFNTENYESLADNRRSRHVVSLLSGKKKKIKDIIDRLQVEDASGSPGPSKSHFSTYSPHEWSHILQLLKSKFPKCPPGQVEAVYKYVYGGAEKDNVWYSSQMPPSDPETQASQEFHYNAQQPMVFSLSQAVEEEFVDAESPALISESFGREQMKGPSFLDEQCISDTTDETGVELKIDEDVARAFRTRMLQPYWLREDVKMKEQPGVSGDKLMKSSSGAARPKEQRWLHLSYNGVDDATKNFPKSPTSTPEPRSGPQVLQRHTYRTPSGLAGRDQLIDLTQCSFNAVKSLISPLKSEVQVPATRTTTWNDKNHSRPQNYGALHQKVQLRLCGGIADSEIYSTLRSRQVVWRLQDFDLQDSEEETKYQLLELDFETVDSKVDLSTAPHHRLSVIKSPTSIASPGDLCDFEVSVKRNASVPPSLPLSAKNLRESLRAIGLKPARTRSEMAEQMGCASQHLIGENAQEQRQGLFDQFTHLVEQSPSLLEKVYTFEPLVLSELIDFLVQKDPFIDKIDDSTIKQWADQMGICLRSAAED.

Disordered regions lie at residues 17–37 (VDSDSPMQEQDELPMTQIPGD), 74–123 (GATE…KSIT), and 327–383 (QPGV…QVLQ). Composition is skewed to low complexity over residues 75–90 (ATESAPPSRAATPPAK) and 99–108 (KAAGRTSTGT). Residues 365–374 (FPKSPTSTPE) are compositionally biased toward polar residues.

The protein belongs to the SLX4 family. As to quaternary structure, forms a heterodimer with SLX1. Phosphorylated in response to DNA damage.

It is found in the nucleus. In terms of biological role, regulatory subunit of the SLX1-SLX4 structure-specific endonuclease that resolves DNA secondary structures generated during DNA repair and recombination. Has endonuclease activity towards branched DNA substrates, introducing single-strand cuts in duplex DNA close to junctions with ss-DNA. The chain is Structure-specific endonuclease subunit SLX4 from Lachancea thermotolerans (strain ATCC 56472 / CBS 6340 / NRRL Y-8284) (Yeast).